Reading from the N-terminus, the 134-residue chain is MVIFMTEEQKRKLTGKMKRMLRAKAHHLEPVVWVGKEGSEKVIKEVDRQLKERGLIKVKVRKAALLYEDKYEIAEKLAKACDAEVVSVVGHVITLFRPREGWKKYLAKKPKKKVKKDEKIIELFEKFKKKAVKE.

The 98-residue stretch at 11–108 (RKLTGKMKRM…REGWKKYLAK (98 aa)) folds into the CRM domain.

This Methanocaldococcus jannaschii (strain ATCC 43067 / DSM 2661 / JAL-1 / JCM 10045 / NBRC 100440) (Methanococcus jannaschii) protein is Probable RNA-binding protein MJ0652.